The primary structure comprises 327 residues: Microtubule-associated protein RP/EB family member 2 (327 aa).

Residues 1-21 (MPGPTQTLSPNGENNNDIIQD) form a disordered region. Ser-9 is modified (phosphoserine). The Calponin-homology (CH) domain maps to 57–159 (TMSRHDIIAW…FIQWFKKFYD (103 aa)). A Phosphotyrosine modification is found at Tyr-167. Disordered regions lie at residues 171-240 (EARQ…DKDL) and 299-327 (ASEEHEGHTEEPEAEEQAHEQQPPQQEEY). The interval 187–327 (QIFNLPKKSH…EQQPPQQEEY (141 aa)) is DCTN1-binding. A compositionally biased stretch (low complexity) spans 200–234 (SPTAGAAKSSPAAKPGSTPSRPSSAKRASSSGSAS). A Phosphoserine modification is found at Ser-219. Residues 236–306 (SDKDLETQVI…LYASEEHEGH (71 aa)) enclose the EB1 C-terminal domain. The interval 259–302 (EGVEKERDFYFGKLREIELLCQEHGQENDDLVQRLMDVLYASEE) is APC-binding. Over residues 300-317 (SEEHEGHTEEPEAEEQAH) the composition is skewed to basic and acidic residues. Low complexity predominate over residues 318–327 (EQQPPQQEEY).

It belongs to the MAPRE family. As to quaternary structure, interacts with DCTN1. Interacts with APC (via C-terminal). Interacts with monomeric and polymerized tubulin. Interacts with SLAIN1. Interacts (via the N-terminal region) with BAG1.

Its subcellular location is the cytoplasm. It is found in the cytoskeleton. May be involved in microtubule polymerization, and spindle function by stabilizing microtubules and anchoring them at centrosomes. May play a role in cell migration. In Pongo abelii (Sumatran orangutan), this protein is Microtubule-associated protein RP/EB family member 2 (MAPRE2).